We begin with the raw amino-acid sequence, 365 residues long: Phosphoserine aminotransferase (365 aa).

Arginine 40 is an L-glutamate binding site. Pyridoxal 5'-phosphate contacts are provided by residues 74 to 75 (AS), phenylalanine 99, threonine 155, aspartate 177, and glutamine 200. Position 201 is an N6-(pyridoxal phosphate)lysine (lysine 201). Residue 241–242 (NT) participates in pyridoxal 5'-phosphate binding.

This sequence belongs to the class-V pyridoxal-phosphate-dependent aminotransferase family. SerC subfamily. Homodimer. Pyridoxal 5'-phosphate serves as cofactor.

It localises to the cytoplasm. It carries out the reaction O-phospho-L-serine + 2-oxoglutarate = 3-phosphooxypyruvate + L-glutamate. The enzyme catalyses 4-(phosphooxy)-L-threonine + 2-oxoglutarate = (R)-3-hydroxy-2-oxo-4-phosphooxybutanoate + L-glutamate. The protein operates within amino-acid biosynthesis; L-serine biosynthesis; L-serine from 3-phospho-D-glycerate: step 2/3. Its function is as follows. Catalyzes the reversible conversion of 3-phosphohydroxypyruvate to phosphoserine and of 3-hydroxy-2-oxo-4-phosphonooxybutanoate to phosphohydroxythreonine. The sequence is that of Phosphoserine aminotransferase from Lactococcus lactis subsp. cremoris (strain MG1363).